We begin with the raw amino-acid sequence, 396 residues long: Putative N(4)-(beta-N-acetylglucosaminyl)-L-asparaginase GE19290 (396 aa).

An N-terminal signal peptide occupies residues M1–A23. Cystine bridges form between C100–C105 and C199–C215. T246 functions as the Nucleophile in the catalytic mechanism. Substrate is bound by residues R274–D277 and T297–G300. Cysteines 357 and 384 form a disulfide.

It belongs to the Ntn-hydrolase family. In terms of assembly, heterotetramer of two alpha and two beta chains arranged as a dimer of alpha/beta heterodimers. Post-translationally, cleaved into an alpha and beta chain by autocatalysis; this activates the enzyme. The N-terminal residue of the beta subunit is responsible for the nucleophile hydrolase activity.

It catalyses the reaction N(4)-(beta-N-acetyl-D-glucosaminyl)-L-asparagine + H2O = N-acetyl-beta-D-glucosaminylamine + L-aspartate + H(+). Functionally, cleaves the GlcNAc-Asn bond which joins oligosaccharides to the peptide of asparagine-linked glycoproteins. This Drosophila yakuba (Fruit fly) protein is Putative N(4)-(beta-N-acetylglucosaminyl)-L-asparaginase GE19290.